A 665-amino-acid polypeptide reads, in one-letter code: DNA ligase (665 aa).

NAD(+)-binding positions include 31 to 35 (DKEFD), 80 to 81 (SL), and glutamate 110. The N6-AMP-lysine intermediate role is filled by lysine 112. Residues arginine 133, glutamate 170, lysine 285, and lysine 309 each contribute to the NAD(+) site. Cysteine 403, cysteine 406, cysteine 421, and cysteine 427 together coordinate Zn(2+). In terms of domain architecture, BRCT spans 587 to 665 (GHTDKLAGQS…NEEEFLKLIS (79 aa)).

It belongs to the NAD-dependent DNA ligase family. LigA subfamily. Mg(2+) serves as cofactor. It depends on Mn(2+) as a cofactor.

The catalysed reaction is NAD(+) + (deoxyribonucleotide)n-3'-hydroxyl + 5'-phospho-(deoxyribonucleotide)m = (deoxyribonucleotide)n+m + AMP + beta-nicotinamide D-nucleotide.. Its function is as follows. DNA ligase that catalyzes the formation of phosphodiester linkages between 5'-phosphoryl and 3'-hydroxyl groups in double-stranded DNA using NAD as a coenzyme and as the energy source for the reaction. It is essential for DNA replication and repair of damaged DNA. This Bacteroides fragilis (strain ATCC 25285 / DSM 2151 / CCUG 4856 / JCM 11019 / LMG 10263 / NCTC 9343 / Onslow / VPI 2553 / EN-2) protein is DNA ligase.